A 780-amino-acid chain; its full sequence is Striatin (780 aa).

Positions 53–120 (LHFLQHEWAR…QERAKYHKLK (68 aa)) form a coiled coil. Residues 55 to 63 (FLQHEWARF) form a caveolin-binding region. Residues 124 to 150 (ELNQGDMKPPSYDSDEGNETEVQPQQN) are disordered. The residue at position 137 (Ser137) is a Phosphoserine. The tract at residues 149–166 (QNSQLMWKQGRQLLRQYL) is calmodulin-binding. The residue at position 225 (Thr225) is a Phosphothreonine. 4 positions are modified to phosphoserine: Ser227, Ser229, Ser245, and Ser259. 2 disordered regions span residues 289 to 310 (DFLVTSEEGDNESRSAGDGTDW) and 365 to 387 (DELPSLQPSVGSPSRPSSSRLPE). Positions 299–310 (NESRSAGDGTDW) are enriched in basic and acidic residues. WD repeat units follow at residues 461–500 (SHFDGIRALAFHPIEPVLITASEDHTLKMWNLQKTAPAKK), 514–553 (AHKGPVLCVVMSSNGEQCYSGGTDGLIQGWNTTNPNIDPY), 567–606 (GHTDAVWGLAYSAAHQRLLSCSADGTLRLWNTTEVAPALS), 662–701 (NSSCQINRVISHPTLPISITAHEDRHIKFYDNNTGKLIHS), 704–743 (AHLEAVTSLAVDPNGLYLMSGSHDCSIRLWNLESKTCIQE), and 750–780 (KFEESIHDVAFHPSKCYIASAGADALAKVFV).

The protein belongs to the WD repeat striatin family. As to quaternary structure, part of the core of STRIPAK complexes composed of PP2A catalytic and scaffolding subunits, the striatins (PP2A regulatory subunits), the striatin-associated proteins MOB4, STRIP1 and STRIP2, PDCD10 and members of the STE20 kinases, such as STK24 and STK26. Interacts with CTTNBP2; this interaction may regulate dendritic spine distribution of STRN. Activation of glutamate receptors weakens the interaction with CTTNBP2. As to expression, preferentially expressed in brain.

Its subcellular location is the cytoplasm. It localises to the membrane. It is found in the cell projection. The protein resides in the dendritic spine. Its function is as follows. Calmodulin-binding scaffolding protein which is the center of the striatin-interacting phosphatase and kinase (STRIPAK) complexes. STRIPAK complexes have critical roles in protein (de)phosphorylation and are regulators of multiple signaling pathways including Hippo, MAPK, nuclear receptor and cytoskeleton remodeling. Different types of STRIPAK complexes are involved in a variety of biological processes such as cell growth, differentiation, apoptosis, metabolism and immune regulation. In Homo sapiens (Human), this protein is Striatin (STRN).